Reading from the N-terminus, the 158-residue chain is Flagellar assembly factor FliW (158 aa).

This sequence belongs to the FliW family. Interacts with translational regulator CsrA and flagellin(s).

The protein resides in the cytoplasm. Functionally, acts as an anti-CsrA protein, binds CsrA and prevents it from repressing translation of its target genes, one of which is flagellin. Binds to flagellin and participates in the assembly of the flagellum. In Syntrophus aciditrophicus (strain SB), this protein is Flagellar assembly factor FliW.